The following is a 273-amino-acid chain: Dermonecrotic toxin LhSicTox-alphaIA1iv (273 aa).

The active site involves histidine 5. Mg(2+) is bound by residues glutamate 25 and aspartate 27. Histidine 41 (nucleophile) is an active-site residue. Cystine bridges form between cysteine 45-cysteine 51 and cysteine 47-cysteine 190. Aspartate 85 serves as a coordination point for Mg(2+).

Belongs to the arthropod phospholipase D family. Class II subfamily. Requires Mg(2+) as cofactor. In terms of tissue distribution, expressed by the venom gland.

The protein localises to the secreted. The enzyme catalyses an N-(acyl)-sphingosylphosphocholine = an N-(acyl)-sphingosyl-1,3-cyclic phosphate + choline. It carries out the reaction an N-(acyl)-sphingosylphosphoethanolamine = an N-(acyl)-sphingosyl-1,3-cyclic phosphate + ethanolamine. It catalyses the reaction a 1-acyl-sn-glycero-3-phosphocholine = a 1-acyl-sn-glycero-2,3-cyclic phosphate + choline. The catalysed reaction is a 1-acyl-sn-glycero-3-phosphoethanolamine = a 1-acyl-sn-glycero-2,3-cyclic phosphate + ethanolamine. Its function is as follows. Dermonecrotic toxins cleave the phosphodiester linkage between the phosphate and headgroup of certain phospholipids (sphingolipid and lysolipid substrates), forming an alcohol (often choline) and a cyclic phosphate. This toxin acts on sphingomyelin (SM). It may also act on ceramide phosphoethanolamine (CPE), lysophosphatidylcholine (LPC) and lysophosphatidylethanolamine (LPE), but not on lysophosphatidylserine (LPS), and lysophosphatidylglycerol (LPG). It acts by transphosphatidylation, releasing exclusively cyclic phosphate products as second products. Induces dermonecrosis, hemolysis, increased vascular permeability, edema, inflammatory response, and platelet aggregation. This Loxosceles hirsuta (Recluse spider) protein is Dermonecrotic toxin LhSicTox-alphaIA1iv.